An 88-amino-acid polypeptide reads, in one-letter code: Small ribosomal subunit protein uS15 (88 aa).

This sequence belongs to the universal ribosomal protein uS15 family. Part of the 30S ribosomal subunit. Forms a bridge to the 50S subunit in the 70S ribosome, contacting the 23S rRNA.

Its function is as follows. One of the primary rRNA binding proteins, it binds directly to 16S rRNA where it helps nucleate assembly of the platform of the 30S subunit by binding and bridging several RNA helices of the 16S rRNA. Functionally, forms an intersubunit bridge (bridge B4) with the 23S rRNA of the 50S subunit in the ribosome. The chain is Small ribosomal subunit protein uS15 from Acidovorax sp. (strain JS42).